The sequence spans 728 residues: Ubiquitin carboxyl-terminal hydrolase BAP1 (728 aa).

Positions 4–235 (GWLELESDPG…IRFNLMAVVP (232 aa)) constitute a UCH catalytic domain. An Arg-finger motif motif is present at residues 56 to 60 (RRSRR). Cysteine 91 serves as the catalytic Nucleophile. Catalysis depends on histidine 169, which acts as the Proton donor. The disordered stretch occupies residues 273-333 (THKSQESQLP…TTHSPPSKCK (61 aa)). Residue serine 292 is modified to Phosphoserine. Positions 363–366 (NHNY) match the HBM-like motif motif. Phosphoserine is present on residues serine 369 and serine 395. 2 disordered regions span residues 372–436 (QEEE…DGQL) and 463–523 (SIKT…SPVT). Residues 395 to 408 (SEDEDDYEDEDEDV) show a composition bias toward acidic residues. Composition is skewed to polar residues over residues 427–436 (SLSNSSDGQL) and 479–523 (THSQ…SPVT). Position 492 is a phosphothreonine (threonine 492). Serine 520, serine 536, and serine 584 each carry phosphoserine. The interval 574 to 623 (LTEGGKGSSPSTRSSQGSQGSSGLEEKEVVEVTESRDKPGLNRSSEPLSG) is disordered. Positions 581–596 (SSPSTRSSQGSQGSSG) are enriched in low complexity. The interaction with BRCA1 stretch occupies residues 595 to 720 (SGLEEKEVVE…QRKPDRRKRS (126 aa)). Positions 597–613 (LEEKEVVEVTESRDKPG) are enriched in basic and acidic residues. Positions 629-660 (KELLALLKCVEAEIANYEACLKEEVEKRKKFK) form a coiled coil. The segment at 641–685 (EIANYEACLKEEVEKRKKFKIDDQRRTHNYDEFICTFISMLAQEG) is interaction with YY1. One can recognise a ULD domain in the interval 669–697 (NYDEFICTFISMLAQEGMLANLVEQNISV). The segment at 698–700 (RRR) is interaction with nucleosomal DNA forming a DNA clamp with ASXL1. A Classical bipartite Nuclear localization signal (NLS) motif is present at residues 698–721 (RRRQGVSIGRLHKQRKPDRRKRSR). The tract at residues 702-728 (GVSIGRLHKQRKPDRRKRSRPYKAKRQ) is disordered. Residues 712 to 728 (RKPDRRKRSRPYKAKRQ) are positively charged C-terminal extension (CTE). The Nuclear localization signal motif lies at 716 to 721 (RRKRSR). Positions 716–723 (RRKRSRPY) match the Non-classical PY-nuclear localization signal (PY-NLS) motif.

It belongs to the peptidase C12 family. BAP1 subfamily. As to quaternary structure, core component of the polycomb repressive deubiquitinase (PR-DUB) complex, at least composed of BAP1, one of ASXL1, ASXL2 or (probably) ASXL3, and one of MBD5 or MBD6. The PR-DUB core associates with a number of accessory proteins, including FOXK1, FOXK2, KDM1B, HCFC1, YY1 and OGT; KDM1B specifically associates with ASXL2 PR-DUB complexes. The BAP1 deubiquitinase activity is not required for PR-DUB assembly. Homodimerizes (via coiled-coil hinge-region between the UCH and ULD domains) to mediate assembly of 2 copies of the BAP1-ASXL heterodimer into a bisymmetric tetramer; dimerization enhances association with nucleosomes. The PR-DUB complex associates with nucleosomes to mediate deubiquitination of 'lys-120' of histone H2AK118ub1 substrates; the association requires the positively charged C-terminal tail of BAP1. Interacts (via ULD domain) with ASXL1 (via DEUBAD domain); the interaction is direct and forms a ubiquitin binding cleft. The interaction with ASXL1 stabilizes BAP1 but is not required for nucleosome binding. Associates (via C-terminus) with nucleosome and chromatosome complexes through direct interaction with DNA and the histone3/4 dimer; this association displaces the histone-2A C-terminal tail, extending and orienting the H2AK118ub1 substrate towards the BAP1 deubiquitinase active site. Also interacts (via arginine finger) directly with the histone H2A-H2B acidic patch; this interaction is not critical for nucleosome-chromatosome association but may play a role in orienting the H2AK118ub1 substrate towards the PR-DUB complex active site. Interacts with BRCA1 (via the RING finger). Interacts (via HBM-like motif) with HCFC1. Interacts (via a C-terminal region overlapping the ULD domain) with YY1; the interaction is direct and requires the interaction with HCFC1. Interacts (when phosphorylated at Thr-492) with FOXK1. Interacts (when phosphorylated at Thr-492) with FOXK2; leading to recruitment of the PR-DUB complex and repression of FOXK2 target genes. Interacts (via non-classical PY-NLS) with TNPO1/transportin-1 (via HEAT repeats 8-12); the interaction is direct, mediates BAP1 nuclear localization and disrupts BAP1 homodimerization. Interacts (via C-terminus) with KPNA1/importin alpha5 and KPNA2/importin alpha1; these interactions can contribute to BAP1 nuclear localization but are less important than the interaction with TNPO1/transportin-1. The interaction with TNPO1/transportin-1 disrupts homodimerization and blocks ubiquitination by UBE2O. Post-translationally, ubiquitinated: monoubiquitinated at multiple sites within its nuclear localization signal (NLS) BY UBE2O, leading to cytoplasmic retention. Able to mediate autodeubiquitination via intramolecular interactions to counteract cytoplasmic retention. Monoubiquitinated on at least 4 sites near or within its PY-NLS. Highly expressed in mammary glands, testis and ovary. Up-regulated in mammary glands during puberty, pregnancy, and as a result of parity.

The protein localises to the cytoplasm. The protein resides in the nucleus. Its subcellular location is the chromosome. It catalyses the reaction Thiol-dependent hydrolysis of ester, thioester, amide, peptide and isopeptide bonds formed by the C-terminal Gly of ubiquitin (a 76-residue protein attached to proteins as an intracellular targeting signal).. Deubiquitinating enzyme that plays a key role in chromatin by mediating deubiquitination of histone H2A and HCFC1. Catalytic component of the polycomb repressive deubiquitinase (PR-DUB) complex, a complex that specifically mediates deubiquitination of histone H2A monoubiquitinated at 'Lys-120' (H2AK119ub1). Does not deubiquitinate monoubiquitinated histone H2B. The PR-DUB complex is an epigenetic regulator of gene expression and acts as a transcriptional coactivator, affecting genes involved in development, cell communication, signaling, cell proliferation and cell viability. Antagonizes PRC1 mediated H2AK119ub1 monoubiquitination. As part of the PR-DUB complex, associates with chromatin enriched in histone marks H3K4me1, H3K4me3, and H3K27Ac, but not in H3K27me3. Acts as a regulator of cell growth by mediating deubiquitination of HCFC1 N-terminal and C-terminal chains, with some specificity toward 'Lys-48'-linked polyubiquitin chains compared to 'Lys-63'-linked polyubiquitin chains. Deubiquitination of HCFC1 does not lead to increase stability of HCFC1. Interferes with the BRCA1 and BARD1 heterodimer activity by inhibiting their ability to mediate ubiquitination and autoubiquitination. It however does not mediate deubiquitination of BRCA1 and BARD1. Able to mediate autodeubiquitination via intramolecular interactions to counteract monoubiquitination at the nuclear localization signal (NLS), thereby protecting it from cytoplasmic sequestration. Negatively regulates epithelial-mesenchymal transition (EMT) of trophoblast stem cells during placental development by regulating genes involved in epithelial cell integrity, cell adhesion and cytoskeletal organization. The sequence is that of Ubiquitin carboxyl-terminal hydrolase BAP1 (Bap1) from Mus musculus (Mouse).